A 409-amino-acid chain; its full sequence is Peptidase T (409 aa).

Zn(2+) is bound at residue H78. Residue D80 is part of the active site. D140 is a binding site for Zn(2+). E173 (proton acceptor) is an active-site residue. Residues E174, D196, and H379 each contribute to the Zn(2+) site.

The protein belongs to the peptidase M20B family. It depends on Zn(2+) as a cofactor.

The protein resides in the cytoplasm. It catalyses the reaction Release of the N-terminal residue from a tripeptide.. Cleaves the N-terminal amino acid of tripeptides. The sequence is that of Peptidase T from Salmonella choleraesuis (strain SC-B67).